The chain runs to 146 residues: Hemoglobin subunit beta (146 aa).

V1 is subject to N-acetylvaline; partial. A Globin domain is found at 2–146 (HLTDAEKAAV…VANALAHKYH (145 aa)). T12 bears the Phosphothreonine mark. K59 is subject to N6-acetyllysine. H63 lines the heme b pocket. An N6-acetyllysine modification is found at K82. H92 contacts heme b. S-nitrosocysteine is present on C93. K144 carries the post-translational modification N6-acetyllysine.

Belongs to the globin family. Heterotetramer of two alpha chains and two beta chains. Red blood cells.

In terms of biological role, involved in oxygen transport from the lung to the various peripheral tissues. This is Hemoglobin subunit beta (HBB) from Procavia capensis habessinica (Abyssinian hyrax).